The chain runs to 77 residues: Omega-conotoxin-like SO-5 (77 aa).

Positions 1 to 22 (MKLTCVMIVAVLLLTACQLITA) are cleaved as a signal peptide. The propeptide occupies 23-42 (DDSRGTQKHRSLRSTTKVSK). 3 disulfides stabilise this stretch: Cys-46-Cys-61, Cys-53-Cys-64, and Cys-60-Cys-71.

Belongs to the conotoxin O1 superfamily. Expressed by the venom duct.

The protein resides in the secreted. In terms of biological role, omega-conotoxins act at presynaptic membranes, they bind and block voltage-gated calcium channels (Cav). The protein is Omega-conotoxin-like SO-5 (SO5) of Conus striatus (Striated cone).